The sequence spans 880 residues: Alanine--tRNA ligase (880 aa).

The Zn(2+) site is built by H566, H570, C668, and H672.

This sequence belongs to the class-II aminoacyl-tRNA synthetase family. Zn(2+) is required as a cofactor.

The protein resides in the cytoplasm. The catalysed reaction is tRNA(Ala) + L-alanine + ATP = L-alanyl-tRNA(Ala) + AMP + diphosphate. Its function is as follows. Catalyzes the attachment of alanine to tRNA(Ala) in a two-step reaction: alanine is first activated by ATP to form Ala-AMP and then transferred to the acceptor end of tRNA(Ala). Also edits incorrectly charged Ser-tRNA(Ala) and Gly-tRNA(Ala) via its editing domain. This chain is Alanine--tRNA ligase, found in Trichormus variabilis (strain ATCC 29413 / PCC 7937) (Anabaena variabilis).